The following is a 254-amino-acid chain: Imidazole glycerol phosphate synthase subunit HisF (254 aa).

Active-site residues include Asp-11 and Asp-130.

Belongs to the HisA/HisF family. In terms of assembly, heterodimer of HisH and HisF.

The protein localises to the cytoplasm. The enzyme catalyses 5-[(5-phospho-1-deoxy-D-ribulos-1-ylimino)methylamino]-1-(5-phospho-beta-D-ribosyl)imidazole-4-carboxamide + L-glutamine = D-erythro-1-(imidazol-4-yl)glycerol 3-phosphate + 5-amino-1-(5-phospho-beta-D-ribosyl)imidazole-4-carboxamide + L-glutamate + H(+). Its pathway is amino-acid biosynthesis; L-histidine biosynthesis; L-histidine from 5-phospho-alpha-D-ribose 1-diphosphate: step 5/9. Functionally, IGPS catalyzes the conversion of PRFAR and glutamine to IGP, AICAR and glutamate. The HisF subunit catalyzes the cyclization activity that produces IGP and AICAR from PRFAR using the ammonia provided by the HisH subunit. The protein is Imidazole glycerol phosphate synthase subunit HisF of Microcystis aeruginosa (strain NIES-843 / IAM M-2473).